Here is a 466-residue protein sequence, read N- to C-terminus: Ribosomal protein uS12 methylthiotransferase RimO (466 aa).

The region spanning 18-133 (PRIGFVSLGC…VMDAVHQHVP (116 aa)) is the MTTase N-terminal domain. Residues C27, C63, C92, C164, C168, and C171 each contribute to the [4Fe-4S] cluster site. Residues 150-391 (LTPKHYAYLK…MAVAEAVSTA (242 aa)) enclose the Radical SAM core domain. The TRAM domain occupies 394–466 (QRRVGSSMQV…QGHDLIGELI (73 aa)).

The protein belongs to the methylthiotransferase family. RimO subfamily. It depends on [4Fe-4S] cluster as a cofactor.

It is found in the cytoplasm. The enzyme catalyses L-aspartate(89)-[ribosomal protein uS12]-hydrogen + (sulfur carrier)-SH + AH2 + 2 S-adenosyl-L-methionine = 3-methylsulfanyl-L-aspartate(89)-[ribosomal protein uS12]-hydrogen + (sulfur carrier)-H + 5'-deoxyadenosine + L-methionine + A + S-adenosyl-L-homocysteine + 2 H(+). Functionally, catalyzes the methylthiolation of an aspartic acid residue of ribosomal protein uS12. In Leptothrix cholodnii (strain ATCC 51168 / LMG 8142 / SP-6) (Leptothrix discophora (strain SP-6)), this protein is Ribosomal protein uS12 methylthiotransferase RimO.